A 122-amino-acid polypeptide reads, in one-letter code: Large ribosomal subunit protein uL18 (122 aa).

Belongs to the universal ribosomal protein uL18 family. In terms of assembly, part of the 50S ribosomal subunit; part of the 5S rRNA/L5/L18/L25 subcomplex. Contacts the 5S and 23S rRNAs.

In terms of biological role, this is one of the proteins that bind and probably mediate the attachment of the 5S RNA into the large ribosomal subunit, where it forms part of the central protuberance. The chain is Large ribosomal subunit protein uL18 from Petrotoga mobilis (strain DSM 10674 / SJ95).